The following is an 886-amino-acid chain: Pyruvate dehydrogenase E1 component (886 aa).

As to quaternary structure, homodimer. Part of the PDH complex, consisting of multiple copies of pyruvate dehydrogenase (E1), dihydrolipoamide acetyltransferase (E2) and lipoamide dehydrogenase (E3). The cofactor is thiamine diphosphate.

The catalysed reaction is N(6)-[(R)-lipoyl]-L-lysyl-[protein] + pyruvate + H(+) = N(6)-[(R)-S(8)-acetyldihydrolipoyl]-L-lysyl-[protein] + CO2. Functionally, component of the pyruvate dehydrogenase (PDH) complex, that catalyzes the overall conversion of pyruvate to acetyl-CoA and CO(2). The protein is Pyruvate dehydrogenase E1 component (aceE) of Haemophilus influenzae (strain ATCC 51907 / DSM 11121 / KW20 / Rd).